Reading from the N-terminus, the 142-residue chain is Hemoglobin subunit alpha-4 (142 aa).

Residues 2–142 (VLSAADKSNV…VSTVLTSKYR (141 aa)) enclose the Globin domain. O2 is bound at residue His59. A heme b-binding site is contributed by His88.

This sequence belongs to the globin family. As to quaternary structure, heterotetramer of two alpha chains and two beta chains. Red blood cells.

Functionally, involved in oxygen transport from the lung to the various peripheral tissues. The protein is Hemoglobin subunit alpha-4 of Bubalus bubalis (Domestic water buffalo).